The primary structure comprises 119 residues: Ribonuclease P protein component (119 aa).

It belongs to the RnpA family. As to quaternary structure, consists of a catalytic RNA component (M1 or rnpB) and a protein subunit.

It catalyses the reaction Endonucleolytic cleavage of RNA, removing 5'-extranucleotides from tRNA precursor.. In terms of biological role, RNaseP catalyzes the removal of the 5'-leader sequence from pre-tRNA to produce the mature 5'-terminus. It can also cleave other RNA substrates such as 4.5S RNA. The protein component plays an auxiliary but essential role in vivo by binding to the 5'-leader sequence and broadening the substrate specificity of the ribozyme. In Chlamydia muridarum (strain MoPn / Nigg), this protein is Ribonuclease P protein component.